The following is a 313-amino-acid chain: Ribonuclease HIII (313 aa).

One can recognise an RNase H type-2 domain in the interval 98–313 (YNCIGSDEAG…REKALKLIKK (216 aa)). A divalent metal cation is bound by residues D104, E105, and D208.

Belongs to the RNase HII family. RnhC subfamily. The cofactor is Mn(2+). Mg(2+) serves as cofactor.

The protein resides in the cytoplasm. It catalyses the reaction Endonucleolytic cleavage to 5'-phosphomonoester.. In terms of biological role, endonuclease that specifically degrades the RNA of RNA-DNA hybrids. This Macrococcus caseolyticus (strain JCSC5402) (Macrococcoides caseolyticum) protein is Ribonuclease HIII.